A 271-amino-acid chain; its full sequence is Dehydrodolichyl diphosphate synthase 7 (271 aa).

The helical transmembrane segment at 24 to 41 (FLFRVLCVGPIPTNISFI) threads the bilayer.

It belongs to the UPP synthase family. Mg(2+) serves as cofactor.

The protein resides in the endoplasmic reticulum membrane. The protein operates within protein modification; protein glycosylation. Its function is as follows. Catalyzes cis-prenyl chain elongation to produce the polyprenyl backbone of dolichol, a glycosyl carrier-lipid required for the biosynthesis of several classes of glycoprotein. The chain is Dehydrodolichyl diphosphate synthase 7 from Arabidopsis thaliana (Mouse-ear cress).